The sequence spans 416 residues: Phosphoribosylamine--glycine ligase (416 aa).

Residues K107 to T303 enclose the ATP-grasp domain. L133–S184 is a binding site for ATP. Residues E273 and N275 each contribute to the Mg(2+) site.

It belongs to the GARS family. Mg(2+) is required as a cofactor. The cofactor is Mn(2+).

The catalysed reaction is 5-phospho-beta-D-ribosylamine + glycine + ATP = N(1)-(5-phospho-beta-D-ribosyl)glycinamide + ADP + phosphate + H(+). Its pathway is purine metabolism; IMP biosynthesis via de novo pathway; N(1)-(5-phospho-D-ribosyl)glycinamide from 5-phospho-alpha-D-ribose 1-diphosphate: step 2/2. This chain is Phosphoribosylamine--glycine ligase, found in Streptomyces coelicolor (strain ATCC BAA-471 / A3(2) / M145).